Here is a 142-residue protein sequence, read N- to C-terminus: MGQGKFAARKLVRDSKKFRWSDKNYARRELNLDVKSDPLEGAPQARGIVLEKVGVEAKQPNSAIRKCVRVQLIKNGRQVTAFAVGDGAINFIDEHDEVEIEGIGGRLGRSMGDIPGVRYVVTSVNNVCLHEMVIGRKEKPRR.

It belongs to the universal ribosomal protein uS12 family. Part of the 30S ribosomal subunit.

Functionally, with S4 and S5 plays an important role in translational accuracy. Located at the interface of the 30S and 50S subunits. This chain is Small ribosomal subunit protein uS12, found in Methanoregula boonei (strain DSM 21154 / JCM 14090 / 6A8).